Here is a 209-residue protein sequence, read N- to C-terminus: Large ribosomal subunit protein uL3 (209 aa).

Residues 128–152 (QARGPMSHGSRYHRRPGSMGPVDPN) form a disordered region.

It belongs to the universal ribosomal protein uL3 family. In terms of assembly, part of the 50S ribosomal subunit. Forms a cluster with proteins L14 and L19.

Its function is as follows. One of the primary rRNA binding proteins, it binds directly near the 3'-end of the 23S rRNA, where it nucleates assembly of the 50S subunit. The chain is Large ribosomal subunit protein uL3 from Halalkalibacterium halodurans (strain ATCC BAA-125 / DSM 18197 / FERM 7344 / JCM 9153 / C-125) (Bacillus halodurans).